The sequence spans 144 residues: Granulocyte-macrophage colony-stimulating factor (144 aa).

The signal sequence occupies residues 1-17 (MWLQNLLLLGTVVCSFS). Ser24 carries O-linked (GalNAc...) serine glycosylation. An O-linked (GalNAc...) threonine glycan is attached at Thr27. Residues Asn44 and Asn54 are each glycosylated (N-linked (GlcNAc...) asparagine). Intrachain disulfides connect Cys71/Cys113 and Cys105/Cys138.

This sequence belongs to the GM-CSF family. As to quaternary structure, monomer. The signaling GM-CSF receptor complex is a dodecamer of two head-to-head hexamers of two alpha, two beta, and two ligand subunits.

Its subcellular location is the secreted. Functionally, cytokine that stimulates the growth and differentiation of hematopoietic precursor cells from various lineages, including granulocytes, macrophages, eosinophils and erythrocytes. In Cervus elaphus (Red deer), this protein is Granulocyte-macrophage colony-stimulating factor (CSF2).